Consider the following 434-residue polypeptide: MPSAPQRPLFSRGSWPEARRLADVLRQETTGGLLLLVFTVIALVWANVAGNSYEEVRQFHLGPAALHLDLSIEHWAADGLLAIFFFVTGLELKKEFVAGDLRSPRAAALPIAAAVGGMAVPALLFVLVNVLHPDSPEGALVGWATPTATDIAFALGILAVVGSHLPSALRTFLLTLAVVDDLLGITVIAIFYTEQVHWTPLLLALLTLAAFTVAVQRRVRSWWLLVPLALATWALVHASGIHATVAGVLLGLVVPVLRSEEHGGPEAGPGLSEHFEHRWRPLSTGFAVPVFALFSAGVAIGGVSGFTAAVQDPVALGVIAGLVLGKPIGIVGTTWLLAKLTRAELDENLRWVDVLGMAMLAGMGFTVSLLIGSLAFGEGTAAGEHVTLGVLVGSLLSAVLAAVVLSRRNRVYRRIEAEERVDADGNGVPDVYER.

10 consecutive transmembrane segments (helical) span residues 30–50, 70–90, 108–128, 141–161, 172–192, 195–215, 286–306, 318–338, 354–374, and 386–406; these read TGGLLLLVFTVIALVWANVAG, LSIEHWAADGLLAIFFFVTGL, ALPIAAAVGGMAVPALLFVLV, VGWATPTATDIAFALGILAVV, FLLTLAVVDDLLGITVIAIFY, QVHWTPLLLALLTLAAFTVAV, FAVPVFALFSAGVAIGGVSGF, VIAGLVLGKPIGIVGTTWLLA, VLGMAMLAGMGFTVSLLIGSL, and VTLGVLVGSLLSAVLAAVVLS.

This sequence belongs to the NhaA Na(+)/H(+) (TC 2.A.33) antiporter family.

The protein resides in the cell membrane. It carries out the reaction Na(+)(in) + 2 H(+)(out) = Na(+)(out) + 2 H(+)(in). Its function is as follows. Na(+)/H(+) antiporter that extrudes sodium in exchange for external protons. The protein is Na(+)/H(+) antiporter NhaA 1 of Kineococcus radiotolerans (strain ATCC BAA-149 / DSM 14245 / SRS30216).